The primary structure comprises 331 residues: Ketol-acid reductoisomerase (NADP(+)) (331 aa).

The 181-residue stretch at 2 to 182 folds into the KARI N-terminal Rossmann domain; sequence AQLFYDSDAD…GGTRAGILET (181 aa). NADP(+) is bound by residues 25 to 28, serine 51, serine 53, and 83 to 86; these read YGSQ and DEFQ. Residue histidine 108 is part of the active site. An NADP(+)-binding site is contributed by glycine 134. The 146-residue stretch at 183–328 folds into the KARI C-terminal knotted domain; sequence NFKEETETDL…KGLRAMFSWL (146 aa). Aspartate 191, glutamate 195, glutamate 227, and glutamate 231 together coordinate Mg(2+). A substrate-binding site is contributed by serine 252.

It belongs to the ketol-acid reductoisomerase family. Mg(2+) is required as a cofactor.

It catalyses the reaction (2R)-2,3-dihydroxy-3-methylbutanoate + NADP(+) = (2S)-2-acetolactate + NADPH + H(+). The catalysed reaction is (2R,3R)-2,3-dihydroxy-3-methylpentanoate + NADP(+) = (S)-2-ethyl-2-hydroxy-3-oxobutanoate + NADPH + H(+). It functions in the pathway amino-acid biosynthesis; L-isoleucine biosynthesis; L-isoleucine from 2-oxobutanoate: step 2/4. The protein operates within amino-acid biosynthesis; L-valine biosynthesis; L-valine from pyruvate: step 2/4. In terms of biological role, involved in the biosynthesis of branched-chain amino acids (BCAA). Catalyzes an alkyl-migration followed by a ketol-acid reduction of (S)-2-acetolactate (S2AL) to yield (R)-2,3-dihydroxy-isovalerate. In the isomerase reaction, S2AL is rearranged via a Mg-dependent methyl migration to produce 3-hydroxy-3-methyl-2-ketobutyrate (HMKB). In the reductase reaction, this 2-ketoacid undergoes a metal-dependent reduction by NADPH to yield (R)-2,3-dihydroxy-isovalerate. This Prochlorococcus marinus (strain MIT 9211) protein is Ketol-acid reductoisomerase (NADP(+)).